The sequence spans 288 residues: uncharacterized protein (288 aa).

Low complexity predominate over residues 126 to 136; the sequence is VAAPASTPVAP. 2 disordered regions span residues 126–227 and 258–288; these read VAAP…VTSV and KEKD…SSEE. A compositionally biased stretch (basic and acidic residues) spans 143-152; it reads RKEFKNEKWK. A compositionally biased stretch (basic residues) spans 153–162; it reads DKKKQGRRRN. Residues 180 to 194 show a composition bias toward acidic residues; the sequence is VAEECLQESSSEEGD. Residues 278 to 288 are compositionally biased toward basic and acidic residues; sequence TLVHDRISSEE.

The protein belongs to the chlamydial CPn_0623/CT_504/TC_0791 family.

This is an uncharacterized protein from Chlamydia trachomatis serovar D (strain ATCC VR-885 / DSM 19411 / UW-3/Cx).